Reading from the N-terminus, the 359-residue chain is GTP 3',8-cyclase 1 (359 aa).

Residues 21-241 (RCRRMMGDLR…SLEKRYGRIE (221 aa)) enclose the Radical SAM core domain. Position 30 (Arg30) interacts with GTP. Residues Cys37 and Cys41 each coordinate [4Fe-4S] cluster. Tyr43 contributes to the S-adenosyl-L-methionine binding site. Cys44 provides a ligand contact to [4Fe-4S] cluster. Arg80 is a GTP binding site. Gly84 serves as a coordination point for S-adenosyl-L-methionine. Thr115 is a GTP binding site. Residue Ser139 participates in S-adenosyl-L-methionine binding. Lys176 provides a ligand contact to GTP. S-adenosyl-L-methionine is bound at residue Met210. Cys273 and Cys276 together coordinate [4Fe-4S] cluster. GTP is bound at residue 278 to 280 (RSR). A [4Fe-4S] cluster-binding site is contributed by Cys290.

It belongs to the radical SAM superfamily. MoaA family. In terms of assembly, monomer and homodimer. Requires [4Fe-4S] cluster as cofactor.

It catalyses the reaction GTP + AH2 + S-adenosyl-L-methionine = (8S)-3',8-cyclo-7,8-dihydroguanosine 5'-triphosphate + 5'-deoxyadenosine + L-methionine + A + H(+). Its pathway is cofactor biosynthesis; molybdopterin biosynthesis. Catalyzes the cyclization of GTP to (8S)-3',8-cyclo-7,8-dihydroguanosine 5'-triphosphate. This chain is GTP 3',8-cyclase 1, found in Mycobacterium tuberculosis (strain CDC 1551 / Oshkosh).